The chain runs to 350 residues: Protein-glutamate methylesterase/protein-glutamine glutaminase 1 (350 aa).

A Response regulatory domain is found at 1 to 116 (MVVDDSAVVR…KGFLHDSAKV (116 aa)). D50 is subject to 4-aspartylphosphate. The 191-residue stretch at 160–350 (LKTTEQLVAI…IPQAILDCSH (191 aa)) folds into the CheB-type methylesterase domain. Catalysis depends on residues S172, H198, and D294.

This sequence belongs to the CheB family. Post-translationally, phosphorylated by CheA. Phosphorylation of the N-terminal regulatory domain activates the methylesterase activity.

The protein localises to the cytoplasm. It carries out the reaction [protein]-L-glutamate 5-O-methyl ester + H2O = L-glutamyl-[protein] + methanol + H(+). The catalysed reaction is L-glutaminyl-[protein] + H2O = L-glutamyl-[protein] + NH4(+). Functionally, involved in chemotaxis. Part of a chemotaxis signal transduction system that modulates chemotaxis in response to various stimuli. Catalyzes the demethylation of specific methylglutamate residues introduced into the chemoreceptors (methyl-accepting chemotaxis proteins or MCP) by CheR. Also mediates the irreversible deamidation of specific glutamine residues to glutamic acid. This Photobacterium profundum (strain SS9) protein is Protein-glutamate methylesterase/protein-glutamine glutaminase 1.